We begin with the raw amino-acid sequence, 190 residues long: Inosine triphosphate pyrophosphatase (190 aa).

An ITP-binding site is contributed by 8–13; it reads TGNANK. A Mg(2+)-binding site is contributed by Glu-37. Residues Lys-49, 65-66, Lys-82, 140-143, Lys-163, and 168-169 contribute to the ITP site; these read DT, FGWD, and HR.

The protein belongs to the HAM1 NTPase family. In terms of assembly, homodimer. Requires Mg(2+) as cofactor. Mn(2+) serves as cofactor.

The protein resides in the cytoplasm. Its subcellular location is the nucleus. It carries out the reaction ITP + H2O = IMP + diphosphate + H(+). The catalysed reaction is dITP + H2O = dIMP + diphosphate + H(+). The enzyme catalyses XTP + H2O = XMP + diphosphate + H(+). Its function is as follows. Pyrophosphatase that hydrolyzes non-canonical purine nucleotides such as inosine triphosphate (ITP), deoxyinosine triphosphate (dITP) or xanthosine 5'-triphosphate (XTP) to their respective monophosphate derivatives. The enzyme does not distinguish between the deoxy- and ribose forms. Probably excludes non-canonical purines from RNA and DNA precursor pools, thus preventing their incorporation into RNA and DNA and avoiding chromosomal lesions. The protein is Inosine triphosphate pyrophosphatase of Batrachochytrium dendrobatidis (strain JAM81 / FGSC 10211) (Frog chytrid fungus).